We begin with the raw amino-acid sequence, 178 residues long: MNIIQQLEAEQAAKIEAKRTLPEFSPGDTVRVNVKVTEGNRTRVQAYEGVCIARSGGGLQENFTVRKISYGEGVERVFPVYSPMIESVDVVRRGKVRRAKLYYLRDRRGKSARIVEDTGVRARKLNDAERAAVAEEKARIDAEKVAAAQALAAEKAAAEAAEAKAAAEAAAAAETAAE.

Belongs to the bacterial ribosomal protein bL19 family.

In terms of biological role, this protein is located at the 30S-50S ribosomal subunit interface and may play a role in the structure and function of the aminoacyl-tRNA binding site. The protein is Large ribosomal subunit protein bL19 of Rhizobium etli (strain ATCC 51251 / DSM 11541 / JCM 21823 / NBRC 15573 / CFN 42).